Consider the following 232-residue polypeptide: Peptide deformylase (232 aa).

Fe cation is bound by residues C135 and H178. Residue E179 is part of the active site. H182 contacts Fe cation.

It belongs to the polypeptide deformylase family. Fe(2+) is required as a cofactor.

It carries out the reaction N-terminal N-formyl-L-methionyl-[peptide] + H2O = N-terminal L-methionyl-[peptide] + formate. Its function is as follows. Removes the formyl group from the N-terminal Met of newly synthesized proteins. Requires at least a dipeptide for an efficient rate of reaction. N-terminal L-methionine is a prerequisite for activity but the enzyme has broad specificity at other positions. The polypeptide is Peptide deformylase (Deinococcus radiodurans (strain ATCC 13939 / DSM 20539 / JCM 16871 / CCUG 27074 / LMG 4051 / NBRC 15346 / NCIMB 9279 / VKM B-1422 / R1)).